A 403-amino-acid chain; its full sequence is GPI-N-acetylgalactosamine transferase PGAP4 (403 aa).

Residues 1-22 lie on the Cytoplasmic side of the membrane; sequence MSTSTSPAAMLLRRLRRLSWGS. A helical membrane pass occupies residues 23 to 43; sequence TAVQLFILTVVTFGLLAPLAC. Topologically, residues 44 to 259 are lumenal; it reads HRLLHSYFYL…RLQHYTNPEP (216 aa). Val-109 serves as a coordination point for UDP-N-acetyl-alpha-D-galactosamine. 2 disulfides stabilise this stretch: Cys-132–Cys-136 and Cys-144–Cys-194. The DXD motif signature appears at 211 to 213; that stretch reads EDD. The chain crosses the membrane as a helical span at residues 260–280; sequence MRILEWVGVGMLLGPLLTWIY. At 281-287 the chain is on the cytoplasmic side; the sequence is MRFASRP. Residues 288-308 traverse the membrane as a helical segment; sequence GFSWPVMLFFSLYSMGLVELV. Residues 309-403 are Lumenal-facing; sequence GRHYFLELRR…LRYNFHPSLL (95 aa). A disulfide bridge connects residues Cys-332 and Cys-333. UDP-N-acetyl-alpha-D-galactosamine contacts are provided by Thr-334, Pro-335, and Lys-362.

This sequence belongs to the PGAP4 family. Post-translationally, glycosylated.

It localises to the golgi apparatus membrane. Golgi-resident glycosylphosphatidylinositol (GPI)-N-acetylgalactosamine transferase that catalyzes the N-acetyl-beta-D-galactosamine transfer from an UDP-N-acetyl-alpha-D-galactosamine to the 4-OH-position of first mannose of the glycosylphosphatidylinositol (GPI) of a GPI-anchored protein (GPI-AP). This modification occurs after the fatty acid remodeling step of the GPI-anchor maturation. This chain is GPI-N-acetylgalactosamine transferase PGAP4, found in Pongo abelii (Sumatran orangutan).